A 201-amino-acid chain; its full sequence is Recombination protein RecR (201 aa).

The C4-type zinc finger occupies 60–75 (CSCCGNVDTSDPCTIC). The Toprim domain maps to 83–178 (ATLIVVEDVS…RVTRLAHGVP (96 aa)).

It belongs to the RecR family.

In terms of biological role, may play a role in DNA repair. It seems to be involved in an RecBC-independent recombinational process of DNA repair. It may act with RecF and RecO. This Brucella melitensis biotype 2 (strain ATCC 23457) protein is Recombination protein RecR.